Reading from the N-terminus, the 700-residue chain is Hedgehog-interacting protein (700 aa).

The first 17 residues, 1 to 17 (MLKMLSFKLLLLAVALG), serve as a signal peptide directing secretion. An N-linked (GlcNAc...) asparagine glycan is attached at asparagine 99. 10 disulfides stabilise this stretch: cysteine 216–cysteine 536, cysteine 218–cysteine 543, cysteine 402–cysteine 624, cysteine 435–cysteine 452, cysteine 500–cysteine 594, cysteine 612–cysteine 623, cysteine 625–cysteine 634, cysteine 639–cysteine 649, cysteine 643–cysteine 655, and cysteine 657–cysteine 666. The segment at 376 to 388 (LDDMEEMDGLSDF) is interaction with SHH zinc binding site. Aspartate 383 lines the Zn(2+) pocket. N-linked (GlcNAc...) asparagine glycans are attached at residues asparagine 416, asparagine 447, and asparagine 459. 2 consecutive EGF-like domains span residues 607–634 (DCSR…GDFC) and 635–667 (RIAK…PQCE).

It belongs to the HHIP family. Interacts with all three hedgehog family members, SHH, IHH and DHH. As to expression, in the adult brain, high expression found in the ventral cochlear nucleus, medial habenula, indusium griseum and tenia tecta. Some expression also in the caudate putamen, the nucleus accumbens, the ventral pallidum and in the superficial layers of the superior colliculus.

The protein resides in the cell membrane. It localises to the secreted. Its function is as follows. Modulates hedgehog signaling in several cell types, including brain and lung through direct interaction with members of the hedgehog family. Soluble forms inhibit Shh-induced differentiation in the fibroblast cell line C3H/10T1/2. In Mus musculus (Mouse), this protein is Hedgehog-interacting protein (Hhip).